The following is a 710-amino-acid chain: Lactoperoxidase (710 aa).

The N-terminal stretch at 1–22 is a signal peptide; sequence MKVLLRLPALLASLTLLQMAAS. Positions 23-98 are excised as a propeptide; sequence TRNATRTATI…WEQSLKRLRR (76 aa). 3 N-linked (GlcNAc...) asparagine glycosylation sites follow: Asn-25, Asn-104, and Asn-131. A disulfide bridge links Cys-130 with Cys-143. Asp-223 is a binding site for heme b. His-224 serves as the catalytic Proton acceptor. Asp-225 serves as a coordination point for Ca(2+). Asn-238 is a glycosylation site (N-linked (GlcNAc...) asparagine). Intrachain disulfides connect Cys-244/Cys-254 and Cys-248/Cys-272. Ca(2+) is bound by residues Thr-299, Phe-301, Asp-303, and Ser-305. Ser-313 bears the Phosphoserine mark. Asn-320 carries an N-linked (GlcNAc...) asparagine glycan. A disulfide bond links Cys-352 and Cys-363. Heme b contacts are provided by Glu-373 and His-466. 3'-nitrotyrosine is present on Tyr-480. 2 disulfides stabilise this stretch: Cys-571–Cys-628 and Cys-669–Cys-694.

This sequence belongs to the peroxidase family. XPO subfamily. The cofactor is Ca(2+). Heme b is required as a cofactor. As to expression, expressed in the lacrimal gland with higher levels and 3-fold higher activity in adult females than males and secreted into tears (at protein level).

It is found in the secreted. Its subcellular location is the cytoplasm. The catalysed reaction is 2 a phenolic donor + H2O2 = 2 a phenolic radical donor + 2 H2O. It carries out the reaction thiocyanate + H2O2 + H(+) = hypothiocyanous acid + H2O. It catalyses the reaction iodide + H2O2 = hypoiodite + H2O. Its function is as follows. Heme-containing oxidoreductase which catalyzes the conversion of thiocyanate (SCN(-)) into antimicrobial agent hypothiocyanous acid (OSCN(-)) in the presence of hydrogen peroxide (H2O2). Also involved in the conversion of iodide (I(-)) into hypoiodite (IO(-)) in the presence of H2O2. Responsible for the inactivation of a wide range of micro-organisms and hence, important component of defense mechanism. May be implicated in airway host defense against infection. May contribute to maintaining an appropriate H2O2 cellular level, therefore protecting cells from H2O2-caused injuries and inflammation. This Mesocricetus auratus (Golden hamster) protein is Lactoperoxidase (LPO).